The chain runs to 369 residues: Endophilin-A (369 aa).

The BAR domain occupies 18 to 248 (TEKMGGAEGT…LQEKRSEAES (231 aa)). Positions 227–247 (QCADVLRGLQETLQEKRSEAE) form a coiled coil. Residues 275–294 (GTPSHISSSASPLPSPMRSP) show a composition bias toward low complexity. The interval 275-296 (GTPSHISSSASPLPSPMRSPAK) is disordered. Residues 305-364 (QQQPCCQALYDFDPENPGELGFKENDIITLLNRVDDNWYEGAVNGRTGYFPQSYVQVQVP) form the SH3 domain.

Belongs to the endophilin family.

The protein resides in the cytoplasm. The protein localises to the membrane. Required presynaptically at the neuromuscular junction. Implicated in synaptic vesicle endocytosis. This chain is Endophilin-A, found in Drosophila pseudoobscura pseudoobscura (Fruit fly).